A 637-amino-acid polypeptide reads, in one-letter code: Biosynthetic arginine decarboxylase (637 aa).

N6-(pyridoxal phosphate)lysine is present on lysine 101. 286 to 296 (FDVGGGLAVDY) serves as a coordination point for substrate.

This sequence belongs to the Orn/Lys/Arg decarboxylase class-II family. SpeA subfamily. Requires Mg(2+) as cofactor. It depends on pyridoxal 5'-phosphate as a cofactor.

It carries out the reaction L-arginine + H(+) = agmatine + CO2. Its pathway is amine and polyamine biosynthesis; agmatine biosynthesis; agmatine from L-arginine: step 1/1. In terms of biological role, catalyzes the biosynthesis of agmatine from arginine. This Shewanella sp. (strain MR-7) protein is Biosynthetic arginine decarboxylase.